Consider the following 535-residue polypeptide: uncharacterized protein (535 aa).

Disordered stretches follow at residues 1 to 58 (MSMK…PRGP), 211 to 254 (EPPK…PPCI), 313 to 353 (RRVA…EQVK), 376 to 416 (RPDK…DQRL), 421 to 440 (QGLD…DAAW), and 508 to 535 (SLFE…SRRD). A compositionally biased stretch (basic and acidic residues) spans 22 to 34 (IRRDPWFGGRDNE). The segment at 179-342 (AQYIRYTPSQ…KARQERSAMR (164 aa)) is SNW. Residues 376–393 (RPDKADKLRKERERDISE) show a composition bias toward basic and acidic residues. Residues 511–535 (EHTKEKKRGGDGGDSRGESKRSRRD) show a composition bias toward basic and acidic residues.

Belongs to the SNW family.

This is an uncharacterized protein from Caenorhabditis elegans.